Reading from the N-terminus, the 151-residue chain is MDNKKGGLFKIAKKLRNGTKVWARAGYFKCKLLKITTTGAPCLFAGRLKRRYDATFQSMVEIFRQEIANDVTCGRVETALLYFVNKFFRSVGCFGKGKEREVKTDRQRDTGSGEQRIRLERDTETLYQSQLRINQVNGWMSGWMQISLILQ.

The protein resides in the cytoplasm. In terms of biological role, has a role in meiosis. The polypeptide is Meiotically up-regulated gene 114 protein (mug114) (Schizosaccharomyces pombe (strain 972 / ATCC 24843) (Fission yeast)).